Here is a 151-residue protein sequence, read N- to C-terminus: Protein-export protein SecB (151 aa).

Belongs to the SecB family. As to quaternary structure, homotetramer, a dimer of dimers. One homotetramer interacts with 1 SecA dimer.

It localises to the cytoplasm. In terms of biological role, one of the proteins required for the normal export of preproteins out of the cell cytoplasm. It is a molecular chaperone that binds to a subset of precursor proteins, maintaining them in a translocation-competent state. It also specifically binds to its receptor SecA. In Azoarcus sp. (strain BH72), this protein is Protein-export protein SecB.